Consider the following 544-residue polypeptide: MSIFIGGAWPYANGSLHLGHIASLLPGDILARYYRAKGENVLYVSGSDCNGTPIAIRAKQEGVTAKDIADQYHEEFERCFRNLGFTYDCYTRTDSEHHHETVQNVFLRLLEEGHIYKKTVEQAYCETCTQFLPDRYVEGICPHCHEAARGDQCDACSAILDPLDLLEKKCKLCGSTPSVQETEHFYFALHTFQEQIKTAVENVKQTGTWRDNAIQLTERYVKEGLQDRAVSRDLPIGVPIPVEGYEDKKIYVWIEAVTGYYSASKHWAEKTGEDDQEFWDSEAKTYYVHGKDNIPFHSVIWPAVLLGIGEGAIPRHIVSNEYLTVEKRKLSTSKNWAVWVPDILERYDPDSIRYFLTVNAPENRDTDFSWREFIYSHNSELLGAYGNFVNRTLKFIEKYYGGIVPKGSIDVELKDKVEGLYKHVGEAIEQTKFKVALESIFDAVRFANKYFDEKQPWKQREDNPVSCEETIYNCVYLIANFVNLLEPFLPFSSERIRNTLSIVNRNWESQHTLPSRIDSVQPLFERIDVKQIEHEVEKLYGAVK.

The short motif at 10–20 (PYANGSLHLGH) is the 'HIGH' region element. Zn(2+) contacts are provided by C141, C144, C153, and C156. The 'KMSKS' region signature appears at 329–333 (KLSTS). T332 serves as a coordination point for ATP.

It belongs to the class-I aminoacyl-tRNA synthetase family. MetG type 1 subfamily. Monomer. Zn(2+) is required as a cofactor.

It is found in the cytoplasm. It carries out the reaction tRNA(Met) + L-methionine + ATP = L-methionyl-tRNA(Met) + AMP + diphosphate. In terms of biological role, is required not only for elongation of protein synthesis but also for the initiation of all mRNA translation through initiator tRNA(fMet) aminoacylation. This is Methionine--tRNA ligase from Bacillus cereus (strain Q1).